Consider the following 882-residue polypeptide: Translation initiation factor IF-2 (882 aa).

A disordered region spans residues 28–296; the sequence is GIRKSADDSV…LQQGFQKPAQ (269 aa). Polar residues predominate over residues 67-81; sequence STLNIPGTGGKSKSV. Over residues 92–209 the composition is skewed to basic and acidic residues; the sequence is VKRDPQEAER…RMAEENKWTD (118 aa). The segment covering 244 to 258 has biased composition (basic residues); it reads GRGRNAKAARPKKGN. The span at 259–272 shows a compositional bias: basic and acidic residues; the sequence is KHAESKADREEARA. The tr-type G domain occupies 381-550; it reads PRAPVVTIMG…LLQAEVLELK (170 aa). The G1 stretch occupies residues 390-397; that stretch reads GHVDHGKT. Position 390 to 397 (390 to 397) interacts with GTP; sequence GHVDHGKT. The interval 415–419 is G2; it reads GITQH. Residues 436–439 form a G3 region; that stretch reads DTPG. Residues 436–440 and 490–493 each bind GTP; these read DTPGH and NKID. Residues 490-493 are G4; sequence NKID. The tract at residues 526–528 is G5; that stretch reads SAK. The residue at position 800 (Lys800) is an N6-acetyllysine.

It belongs to the TRAFAC class translation factor GTPase superfamily. Classic translation factor GTPase family. IF-2 subfamily.

The protein localises to the cytoplasm. Its function is as follows. One of the essential components for the initiation of protein synthesis. Protects formylmethionyl-tRNA from spontaneous hydrolysis and promotes its binding to the 30S ribosomal subunits. Also involved in the hydrolysis of GTP during the formation of the 70S ribosomal complex. The chain is Translation initiation factor IF-2 from Shigella boydii serotype 4 (strain Sb227).